We begin with the raw amino-acid sequence, 1192 residues long: Protein pangolin, isoform J (1192 aa).

Positions 351–357 (LGLPSEE) match the Nuclear localization signal motif. Residues 691-713 (AKHTSNAQSNESKETTNDKKKPH) form a disordered region. The HMG box DNA-binding region spans 714 to 782 (IKKPLNAFML…LHMELYPGWS (69 aa)). Disordered regions lie at residues 790–812 (VSKKKKRKKDRSTTDSGGNNMKK), 847–916 (PAED…SPST), 955–986 (QRPTLVSTSGSSSGSTSSISTTPNTSSTVSPV), and 1136–1192 (QLNN…ISVS). The segment covering 862–871 (SDDDEDDYDD) has biased composition (acidic residues). Low complexity-rich tracts occupy residues 898–915 (SMPSPGCLSGLSSLQSPS) and 957–986 (PTLVSTSGSSSGSTSSISTTPNTSSTVSPV). Polar residues-rich tracts occupy residues 1140 to 1162 (RTENPNRSEQTMLSVSNHSVNSS) and 1170 to 1192 (SQAIVSSNPPNAGSSDNGVISVS).

It belongs to the TCF/LEF family. As to quaternary structure, binds to the beta-catenin homolog arm or to gro.

The protein resides in the nucleus. Segment polarity protein. Functions together with arm to transduce the Wingless (Wg) signal in embryos and in developing adult tissues. Acts as a transcriptional activator, but in the absence of arm, it binds to gro and acts as a transcriptional repressor of wg-responsive genes. This is Protein pangolin, isoform J from Drosophila melanogaster (Fruit fly).